The following is a 111-amino-acid chain: Somatostatin-1B (111 aa).

The N-terminal stretch at 1 to 19 (MQLLSSLVSLLLVLYSVRA) is a signal peptide. The propeptide occupies 20–87 (AAVLPVEERN…RLEERAVYNR (68 aa)). The cysteines at positions 100 and 111 are disulfide-linked.

This sequence belongs to the somatostatin family.

The protein resides in the secreted. Its function is as follows. Somatostatin inhibits the release of somatotropin. This is Somatostatin-1B (sst1b) from Carassius auratus (Goldfish).